A 458-amino-acid polypeptide reads, in one-letter code: MRPLHPIDFIFLSLEKRQQPMHVGGLFLFQIPDNAPDTFIQDLVNDIRISKSIPVPPFNNKLNGLFWDEDEEFDLDHHFRHIALPHPGRIRELLIYISQEHSTLLDRAKPLWTCNIIEGIEGNRFAMYFKIHHAMVDGVAGMRLIEKSLSHDVTEKSIVPPWCVEGKRAKRLREPKTGKIKKIMSGIKSQLQATPTVIQELSQTVFKDIGRNPDHVSSFQAPCSILNQRVSSSRRFAAQSFDLDRFRNIAKSLNVTINDVVLAVCSGALRAYLMSHNSLPSKPLIAMVPASIRNDDSDVSNRITMILANLATHKDDPLQRLEIIRRSVQNSKQRFKRMTSDQILNYSAVVYGPAGLNIISGMMPKRQAFNLVISNVPGPREPLYWNGAKLDALYPASIVLDGQALNITMTSYLDKLEVGLIACRNALPRMQNLLTHLEEEIQLFEGVIAKQEDIKTAN.

The active-site Proton acceptor is the His-133.

The protein belongs to the long-chain O-acyltransferase family.

It carries out the reaction a long chain fatty alcohol + a fatty acyl-CoA = a wax ester + CoA. It catalyses the reaction an acyl-CoA + a 1,2-diacyl-sn-glycerol = a triacyl-sn-glycerol + CoA. The protein operates within glycerolipid metabolism; triacylglycerol biosynthesis. Functionally, bifunctional wax ester synthase/diacylglycerol acyltransferase (WS and DGAT). Catalyzes the terminal and only committed step in triacylglycerol synthesis by using diacylglycerol and fatty acyl CoA as substrates. Required for storage lipid synthesis. WS uses C(12)-CoA to C(18)-CoA substrates whereas DGAT prefers C(20)-CoA. Upon expression in E.coli and Pseudomonas citronellolis (DSM 50332) both WS and DGAT activities increase. This is O-acyltransferase WSD (wax-dgaT) from Acinetobacter baylyi (strain ATCC 33305 / BD413 / ADP1).